Reading from the N-terminus, the 103-residue chain is Histone H4.1 (103 aa).

The segment covering 1–14 (MSGRGKGGKGLGKG) has biased composition (gly residues). Residues 1-20 (MSGRGKGGKGLGKGGAKRHR) are disordered. Residue lysine 6 is modified to N6-acetyl-N6-methyllysine; alternate. Lysine 6, lysine 9, and lysine 13 each carry N6-methyllysine; alternate. Lysine 13 is modified (N6-acetyl-N6-methyllysine; alternate). The DNA-binding element occupies 17–21 (KRHRK). Lysine 92 bears the N6-glutaryllysine mark.

The protein belongs to the histone H4 family. The nucleosome is a histone octamer containing two molecules each of H2A, H2B, H3 and H4 assembled in one H3-H4 heterotetramer and two H2A-H2B heterodimers. The octamer wraps approximately 147 bp of DNA. Glutarylation at Lys-92 (H4K91glu) destabilizes nucleosomes by promoting dissociation of the H2A-H2B dimers from nucleosomes.

The protein localises to the nucleus. It is found in the chromosome. Functionally, core component of nucleosome. Nucleosomes wrap and compact DNA into chromatin, limiting DNA accessibility to the cellular machineries which require DNA as a template. Histones thereby play a central role in transcription regulation, DNA repair, DNA replication and chromosomal stability. DNA accessibility is regulated via a complex set of post-translational modifications of histones, also called histone code, and nucleosome remodeling. This is Histone H4.1 (HHF1) from Eremothecium gossypii (strain ATCC 10895 / CBS 109.51 / FGSC 9923 / NRRL Y-1056) (Yeast).